The following is a 117-amino-acid chain: MAYSAMTKLALVVALCMVVSVPIAQAITCGQVSSNLAPCIPYVRGGGAVPPACCNGIRNVNNLARTTPDRQAACNCLKQLSASVPGVNPNNAAALPGKCGVNIPYQISPSTNCANVK.

An N-terminal signal peptide occupies residues 1–26 (MAYSAMTKLALVVALCMVVSVPIAQA). Intrachain disulfides connect Cys29–Cys76, Cys39–Cys53, Cys54–Cys99, and Cys74–Cys113.

Belongs to the plant LTP family.

Functionally, plant non-specific lipid-transfer proteins transfer phospholipids as well as galactolipids across membranes. May play a role in wax or cutin deposition in the cell walls of expanding epidermal cells and certain secretory tissues. This chain is Non-specific lipid-transfer protein 1, found in Prunus dulcis (Almond).